The following is a 223-amino-acid chain: MIF4G domain-containing protein A (223 aa).

In terms of domain architecture, MIF4G spans 7–206 (QEDYKMQAFD…LEMIEYRAAG (200 aa)).

This sequence belongs to the MIF4GD family. Interacts with eif4g1, eif4g2 and slbp; probably tethered by SLBP to the 3'-end of mRNAs ending with the histone stem-loop, it also interacts with eif4g1 which is bound to their 5'-end.

It is found in the cytoplasm. It localises to the nucleus. Functions in replication-dependent translation of histone mRNAs which differ from other eukaryotic mRNAs in that they do not end with a poly-A tail but a stem-loop. May participate in circularizing those mRNAs specifically enhancing their translation. This is MIF4G domain-containing protein A (mif4gd-a) from Xenopus laevis (African clawed frog).